Reading from the N-terminus, the 293-residue chain is Protein BOBBER 2 (293 aa).

N-acetylalanine is present on Ala-2. Residues 50-80 (EKEIVAAVMAAKQRLREAEKKKLEKESVKSM) adopt a coiled-coil conformation. Composition is skewed to basic and acidic residues over residues 67 to 102 (AEKK…KEES) and 110 to 120 (EIEKPKEEKES). A disordered region spans residues 67 to 125 (AEKKKLEKESVKSMEVEKPKKDSLKPTELEKPKEESLMATDPMEIEKPKEEKESGPIVP). A CS domain is found at 131-220 (LDFEKYSWGQ…DQMEWWKYCV (90 aa)).

The protein localises to the cytoplasm. It is found in the cytoplasmic granule. Small heat shock protein required for the establishment of auxin gradients and for patterning of the apical domain of the embryo. Involved in the specification of the cotyledon primordia. Also required for normal inflorescence and floral meristem function, normal developmental patterning and thermotolerance. Acts as a molecular chaperone. This is Protein BOBBER 2 (BOB2) from Arabidopsis thaliana (Mouse-ear cress).